The following is a 607-amino-acid chain: Replication factor C large subunit (607 aa).

55–62 (GPAGIGKT) serves as a coordination point for ATP. The interval 468 to 607 (EEEKPQKEGS…PKNQKTLFDF (140 aa)) is disordered. Residues 506–518 (TSEKKENSEKKEN) show a composition bias toward basic and acidic residues. Polar residues predominate over residues 548 to 558 (SESVEQKTSSK).

It belongs to the activator 1 small subunits family. RfcL subfamily. As to quaternary structure, heteromultimer composed of small subunits (RfcS) and large subunits (RfcL).

In terms of biological role, part of the RFC clamp loader complex which loads the PCNA sliding clamp onto DNA. The polypeptide is Replication factor C large subunit (Methanosarcina acetivorans (strain ATCC 35395 / DSM 2834 / JCM 12185 / C2A)).